The following is a 374-amino-acid chain: Ribosomal RNA large subunit methyltransferase G (374 aa).

It belongs to the methyltransferase superfamily. RlmG family.

It localises to the cytoplasm. The catalysed reaction is guanosine(1835) in 23S rRNA + S-adenosyl-L-methionine = N(2)-methylguanosine(1835) in 23S rRNA + S-adenosyl-L-homocysteine + H(+). Functionally, specifically methylates the guanine in position 1835 (m2G1835) of 23S rRNA. This chain is Ribosomal RNA large subunit methyltransferase G, found in Ectopseudomonas mendocina (strain ymp) (Pseudomonas mendocina).